A 115-amino-acid polypeptide reads, in one-letter code: Phosphoribosyl-AMP cyclohydrolase (115 aa).

Residue D80 coordinates Mg(2+). Position 81 (C81) interacts with Zn(2+). Residues D82 and D84 each contribute to the Mg(2+) site. Residues C97 and C104 each coordinate Zn(2+).

Belongs to the PRA-CH family. In terms of assembly, homodimer. It depends on Mg(2+) as a cofactor. Requires Zn(2+) as cofactor.

The protein localises to the cytoplasm. It catalyses the reaction 1-(5-phospho-beta-D-ribosyl)-5'-AMP + H2O = 1-(5-phospho-beta-D-ribosyl)-5-[(5-phospho-beta-D-ribosylamino)methylideneamino]imidazole-4-carboxamide. Its pathway is amino-acid biosynthesis; L-histidine biosynthesis; L-histidine from 5-phospho-alpha-D-ribose 1-diphosphate: step 3/9. In terms of biological role, catalyzes the hydrolysis of the adenine ring of phosphoribosyl-AMP. This is Phosphoribosyl-AMP cyclohydrolase from Mycolicibacterium smegmatis (strain ATCC 700084 / mc(2)155) (Mycobacterium smegmatis).